A 232-amino-acid chain; its full sequence is Ribonuclease 3 (232 aa).

The RNase III domain maps to Q5–D134. E47 is a binding site for Mg(2+). Residue D51 is part of the active site. D120 and E123 together coordinate Mg(2+). E123 is an active-site residue. In terms of domain architecture, DRBM spans D160–D229.

The protein belongs to the ribonuclease III family. As to quaternary structure, homodimer. Mg(2+) serves as cofactor.

It is found in the cytoplasm. It carries out the reaction Endonucleolytic cleavage to 5'-phosphomonoester.. Its function is as follows. Digests double-stranded RNA. Involved in the processing of primary rRNA transcript to yield the immediate precursors to the large and small rRNAs (23S and 16S). Processes some mRNAs, and tRNAs when they are encoded in the rRNA operon. Processes pre-crRNA and tracrRNA of type II CRISPR loci if present in the organism. This is Ribonuclease 3 from Streptococcus pneumoniae (strain Hungary19A-6).